We begin with the raw amino-acid sequence, 222 residues long: Acyl-protein thioesterase 1 homolog 2 (222 aa).

Residues serine 116, aspartate 169, and histidine 202 each act as charge relay system in the active site.

The protein belongs to the AB hydrolase superfamily. AB hydrolase 2 family.

The protein localises to the cytoplasm. It localises to the nucleus. It carries out the reaction S-hexadecanoyl-L-cysteinyl-[protein] + H2O = L-cysteinyl-[protein] + hexadecanoate + H(+). Functionally, hydrolyzes fatty acids from S-acylated cysteine residues in proteins with a strong preference for palmitoylated G-alpha proteins over other acyl substrates. Mediates the deacylation of G-alpha proteins such as GPA1 in vivo, but has weak or no activity toward palmitoylated Ras proteins. Has weak lysophospholipase activity in vitro; however such activity may not exist in vivo. The chain is Acyl-protein thioesterase 1 homolog 2 from Dictyostelium discoideum (Social amoeba).